Reading from the N-terminus, the 276-residue chain is Glutamate racemase (276 aa).

Residues 12 to 13 (DS) and 44 to 45 (YG) each bind substrate. Cysteine 76 (proton donor/acceptor) is an active-site residue. Residue 77 to 78 (NT) coordinates substrate. The active-site Proton donor/acceptor is the cysteine 187. 188-189 (TH) is a substrate binding site.

The protein belongs to the aspartate/glutamate racemases family.

It carries out the reaction L-glutamate = D-glutamate. Its pathway is cell wall biogenesis; peptidoglycan biosynthesis. In terms of biological role, provides the (R)-glutamate required for cell wall biosynthesis. The polypeptide is Glutamate racemase (Granulibacter bethesdensis (strain ATCC BAA-1260 / CGDNIH1)).